The following is a 397-amino-acid chain: Phosphoglycerate kinase (397 aa).

Residues 22 to 24, arginine 37, 60 to 63, arginine 119, and arginine 152 contribute to the substrate site; these read DLN and HFGR. ATP is bound by residues lysine 202, glutamate 324, and 354–357; that span reads GGDT.

Belongs to the phosphoglycerate kinase family. In terms of assembly, monomer.

The protein resides in the cytoplasm. The enzyme catalyses (2R)-3-phosphoglycerate + ATP = (2R)-3-phospho-glyceroyl phosphate + ADP. It participates in carbohydrate degradation; glycolysis; pyruvate from D-glyceraldehyde 3-phosphate: step 2/5. The polypeptide is Phosphoglycerate kinase (pgk) (Zymomonas mobilis subsp. mobilis (strain ATCC 31821 / ZM4 / CP4)).